A 66-amino-acid chain; its full sequence is MAKGKDVRIRVILECTSCVRNDLNKESRGISRYITQKNRHNTPSRLELRKFCPYCYKHTIHGEIKK.

This sequence belongs to the bacterial ribosomal protein bL33 family.

Its subcellular location is the plastid. It is found in the chloroplast. The protein is Large ribosomal subunit protein bL33c of Drimys granadensis.